The following is a 136-amino-acid chain: Pilotin AspS 2 (136 aa).

A signal peptide spans 1 to 24 (MSIKQMPGRVLISLLLSVTGLLSG). C25 is lipidated: N-palmitoyl cysteine. The S-diacylglycerol cysteine moiety is linked to residue C25. C94 and C131 are joined by a disulfide.

Belongs to the GspS/AspS pilotin family. As to quaternary structure, cryo-electron microscopy shows that the complex forms a cylindrical channel with 15 GspD2 subunits, each of which interacts with its surrounding AspS2 (GspS-beta).

The protein resides in the cell outer membrane. Part of a type II secretion system (T2SS, formerly general secretion pathway, GSP) for the export of folded proteins across the outer membrane. Required for correct assembly of the type II secretion system-beta (T2SS-beta), for localization of GspD-beta to the cell outer membrane and for export of a labile enterotoxin by T2SS-beta. Each AspS2 binds to 2 GspD2 subunits and may clamp the monomers together, stabilizing structure and accelerating its assembly. The chain is Pilotin AspS 2 from Escherichia coli O78:H11 (strain H10407 / ETEC).